A 688-amino-acid chain; its full sequence is NADH-ubiquinone oxidoreductase 75 kDa subunit (688 aa).

The 85-residue stretch at 1-85 (MIIRFKINEI…DESIETEIDE (85 aa)) folds into the 2Fe-2S ferredoxin-type domain. [2Fe-2S] cluster-binding residues include Cys-38, Cys-49, Cys-52, and Cys-66. The 40-residue stretch at 85–124 (EILKAREGVMEFLLINHPLDCPICDQGGECDLQEQTLAYG) folds into the 4Fe-4S His(Cys)3-ligated-type domain. Residues His-101, Cys-105, Cys-108, Cys-114, Cys-153, Cys-156, Cys-159, and Cys-204 each contribute to the [4Fe-4S] cluster site. A 4Fe-4S Mo/W bis-MGD-type domain is found at 223 to 279 (LKNIKGIDIFDTLLTPINYQVKGGEIFRILPRINDRINEEWITDKVRFHYESYKIIE).

It belongs to the complex I 75 kDa subunit family. As to quaternary structure, complex I is composed of about 45 different subunits. Requires [2Fe-2S] cluster as cofactor. [4Fe-4S] cluster serves as cofactor.

It localises to the mitochondrion inner membrane. It catalyses the reaction a ubiquinone + NADH + 5 H(+)(in) = a ubiquinol + NAD(+) + 4 H(+)(out). In terms of biological role, core subunit of the mitochondrial membrane respiratory chain NADH dehydrogenase (Complex I) that is believed to belong to the minimal assembly required for catalysis. Complex I functions in the transfer of electrons from NADH to the respiratory chain. The immediate electron acceptor for the enzyme is believed to be ubiquinone. This is the largest subunit of complex I and it is a component of the iron-sulfur (IP) fragment of the enzyme. It may form part of the active site crevice where NADH is oxidized. The protein is NADH-ubiquinone oxidoreductase 75 kDa subunit (nad11) of Dictyostelium discoideum (Social amoeba).